The primary structure comprises 367 residues: Glutamate 5-kinase (367 aa).

K8 contributes to the ATP binding site. 3 residues coordinate substrate: S49, D136, and N148. ATP is bound by residues 168–169 (TD) and 210–216 (TGGMATK). Residues 275–353 (TGKLLLDAGA…DQIVQILGYE (79 aa)) form the PUA domain.

It belongs to the glutamate 5-kinase family.

It localises to the cytoplasm. It carries out the reaction L-glutamate + ATP = L-glutamyl 5-phosphate + ADP. Its pathway is amino-acid biosynthesis; L-proline biosynthesis; L-glutamate 5-semialdehyde from L-glutamate: step 1/2. Functionally, catalyzes the transfer of a phosphate group to glutamate to form L-glutamate 5-phosphate. The sequence is that of Glutamate 5-kinase from Synechococcus elongatus (strain ATCC 33912 / PCC 7942 / FACHB-805) (Anacystis nidulans R2).